We begin with the raw amino-acid sequence, 1409 residues long: Receptor-type tyrosine-protein phosphatase (1409 aa).

The signal sequence occupies residues 1–22; sequence MRINRWIWWATVILLYLRTGLA. Topologically, residues 23–712 are extracellular; that stretch reads ADFFRSSEEN…LLDTESSSSG (690 aa). Residues 32–53 are disordered; the sequence is NDRKSSDDLDNFNSTKIEPDKP. Residues 159–267 enclose the Ig-like C2-type domain; that stretch reads PTKCDKRDLA…TASASDLDVT (109 aa). C189 and C255 are disulfide-bonded. Fibronectin type-III domains lie at 276–366 and 372–502; these read APRQ…TKQK and KEED…AQPD. Residues 713–733 traverse the membrane as a helical segment; that stretch reads FGIFMKIILPFLLFLAFATGV. Residues 734–1409 are Cytoplasmic-facing; that stretch reads TMFFVNRKGH…LADYISKTYR (676 aa). Tyrosine-protein phosphatase domains lie at 793 to 1072 and 1135 to 1403; these read FAQE…LAEW and LEEE…LADY. Active-site phosphocysteine intermediate residues include C1013 and C1344.

This sequence belongs to the protein-tyrosine phosphatase family. Receptor class 2A subfamily. In terms of tissue distribution, expressed in muscles, hypodermis and a subset of neurons. Expressed in the AVA neurons, with high expression in the anterior half of the preanal ganglion where AVA neurons contact the PHB neurons.

It localises to the cell membrane. The protein resides in the synapse. It catalyses the reaction O-phospho-L-tyrosyl-[protein] + H2O = L-tyrosyl-[protein] + phosphate. Functionally, possesses an intrinsic protein tyrosine phosphatase (PTPase) activity. Regulates egl-15 activity which is required for hypodermis-mediated fluid homeostasis and protein degradation in muscle. During the formation of neuromuscular junctions at the larval stage, negatively regulates membrane protrusion from body wall muscles. Plays a role in nicotinic acetylcholine receptor (nAChR)-mediated sensitivity to nicotine. Regulates synaptic levels of nAchR subunit lev-1 in the nerve cord. Promotes the outgrowth of the quaternary dendritic branches of the PVD sensory neurons. In parallel to the sax-7/mnr-1 pathway, also controls the extension of the PVD primary branches. Acts in the netrin/DCC pathway to mediate the formation of synapses between the AVA interneurons and the PHB sensory neurons. Also required for the formation of synapses between the AVA interneurons and the VA10 motor neurons. This is Receptor-type tyrosine-protein phosphatase from Caenorhabditis elegans.